Consider the following 520-residue polypeptide: 1,4-alpha-glucan branching enzyme TTHA1902 (520 aa).

The Nucleophile role is filled by Glu184. Arg265 and Gly282 together coordinate substrate. Asp353 serves as the catalytic Proton donor. Substrate-binding residues include Trp404, Asp460, and Gln469.

This sequence belongs to the glycosyl hydrolase 57 family.

The enzyme catalyses Transfers a segment of a (1-&gt;4)-alpha-D-glucan chain to a primary hydroxy group in a similar glucan chain.. It functions in the pathway glycan biosynthesis; glycogen biosynthesis. Functionally, catalyzes the formation of branch points in alpha-glucans by cleavage of an alpha-1,4 glycosidic bond and subsequent transfer of the cleaved-off oligosaccharide to a new alpha-1,6 position. The branch chain-length distribution of the reaction products shows degree of polymerization (DP) of 3 to 13, with two local maxima at DP 7 and DP 11. Exhibits an alpha-retaining catalytic mechanism. Is involved in glycogen biosynthesis. Shows a secondary activity, i.e. the hydrolysis of the substrate, being 4% of the total activity. Can use amylose as substrate but not alpha-1,4-linked oligosaccharides of 2-7 glucose residues, beta-cyclodextrin, 6-O-glucosyl-beta-cyclodextrin and 6-O-maltosyl-beta-cyclodextrin. Is not able to branch amylopectin further, it only hydrolyzes amylopectin. Thus, displays preference for linear and long substrates (amylose) over branched structures (amylopectin). The polypeptide is 1,4-alpha-glucan branching enzyme TTHA1902 (Thermus thermophilus (strain ATCC 27634 / DSM 579 / HB8)).